A 506-amino-acid polypeptide reads, in one-letter code: Sodium transporter HKT1 (506 aa).

At 1–19 (MDRVVAKIAKIRSQLTKLR) the chain is on the cytoplasmic side. A helical transmembrane segment spans residues 20-40 (SLFFLYFIYFLFFSFLGFLAL). The Extracellular segment spans residues 41 to 81 (KITKPRTTSRPHDFDLFFTSVSAITVSSMSTVDMEVFSNTQ). A helical transmembrane segment spans residues 82-102 (LIFLTILMFLGGEIFTSFLNL). Residues 103–159 (YVSYFTKFVFPHNKIRHILGSYNSDSSIEDRCDVETVTDYREGLIKIDERASKCLYS) lie on the Cytoplasmic side of the membrane. A helical membrane pass occupies residues 160–180 (VVLSYHLVTNLVGSVLLLVYV). The Extracellular portion of the chain corresponds to 181-232 (NFVKTARDVLSSKEISPLTFSVFTTVSTFANCGFVPTNENMIIFRKNSGLIW). Residues 233–253 (LLIPQVLMGNTLFPCFLVLLI) traverse the membrane as a helical segment. Residues 254–286 (WGLYKITKRDEYGYILKNHNKMGYSHLLSVRLC) are Cytoplasmic-facing. Residues 287-307 (VLLGVTVLGFLIIQLLFFCAF) traverse the membrane as a helical segment. The Extracellular portion of the chain corresponds to 308–348 (EWTSESLEGMSSYEKLVGSLFQVVNSRHTGETIVDLSTLSP). The helical transmembrane segment at 349 to 369 (AILVLFILMMYLPPYTLFMPL) threads the bilayer. Topologically, residues 370–392 (TEQKTIEKEGGDDDSENGKKVKK) are cytoplasmic. Residues 393–413 (SGLIVSQLSFLTICIFLISIT) form a helical membrane-spanning segment. Over 414–465 (ERQNLQRDPINFNVLNITLEVISAYGNVGFTTGYSCERRVDISDGGCKDASY) the chain is Extracellular. Asparagine 429 is a glycosylation site (N-linked (GlcNAc...) asparagine). A helical membrane pass occupies residues 466-486 (GFAGRWSPMGKFVLIIVMFYG). The Cytoplasmic portion of the chain corresponds to 487-506 (RFKQFTAKSGRAWILYPSSS).

Belongs to the TrkH potassium transport family. HKT (TC 2.A.38.3) subfamily. In terms of processing, N-glycosylated. Not essential for functional expression and membrane targeting. As to expression, highly expressed in roots. Expressed in flowers, leaves and stems. Expressed in the vascular tissues of every organs. In roots, leaves and flower peduncles, it is only expressed in the phloem tissues. Not expressed in root peripheral cells.

The protein localises to the cell membrane. The catalysed reaction is Na(+)(in) = Na(+)(out). In terms of biological role, sodium transporter protein, which plays a central role in plant tolerance to salt. Upon prolongated exposure to high concentrations, Na(+) translocates from the roots to the transpiring leaves where it can increase to toxic level. Involved in Na(+) recirculation from shoots to roots, probably by mediating Na(+) loading into the phloem sap in shoots and unloading in roots, thereby removing large amounts of Na(+) from the shoot. Does not transport K(+) but regulates K(+) nutrient status via its ability to facilitate Na(+) homeostasis. Probably not involved in root uptake of Na(+). In Arabidopsis thaliana (Mouse-ear cress), this protein is Sodium transporter HKT1 (HKT1).